We begin with the raw amino-acid sequence, 202 residues long: Dual-action ribosomal maturation protein DarP (202 aa).

Positions 1-13 are enriched in low complexity; it reads MPPMTRNTRNNPN. Residues 1-39 form a disordered region; the sequence is MPPMTRNTRNNPNGRFPGAFAPEDEDDLPKSKSQRKRDM.

The protein belongs to the DarP family.

Its subcellular location is the cytoplasm. In terms of biological role, member of a network of 50S ribosomal subunit biogenesis factors which assembles along the 30S-50S interface, preventing incorrect 23S rRNA structures from forming. Promotes peptidyl transferase center (PTC) maturation. This Cupriavidus metallidurans (strain ATCC 43123 / DSM 2839 / NBRC 102507 / CH34) (Ralstonia metallidurans) protein is Dual-action ribosomal maturation protein DarP.